A 336-amino-acid polypeptide reads, in one-letter code: Atypical chemokine receptor 1 (336 aa).

Residues 1–63 (MGNCLHQAEL…CNLLDDSSLP (63 aa)) lie on the Extracellular side of the membrane. N-linked (GlcNAc...) asparagine glycosylation is found at Asn-16, Asn-27, and Asn-33. 2 cysteine pairs are disulfide-bonded: Cys-51-Cys-276 and Cys-129-Cys-195. The chain crosses the membrane as a helical span at residues 64 to 84 (FFILASVLGILASSTVLFLLF). Over 85-95 (RPLFRWQLCPG) the chain is Cytoplasmic. Residues 96–116 (WPVLAQLAVGSTLFSIVVPIL) traverse the membrane as a helical segment. The Extracellular segment spans residues 117 to 129 (APGLGNTRSSAPC). Residues 130 to 153 (SLGYCVWYGSAFAQALLLGCHASL) form a helical membrane-spanning segment. The Cytoplasmic segment spans residues 154–166 (GPKLGAGQVPGLT). The chain crosses the membrane as a helical span at residues 167–187 (LGLSVGLWGAAALLTLPITLA). Over 188–207 (SDASDGLCTPIYSTELKALQ) the chain is Extracellular. The helical transmembrane segment at 208–228 (ATHTVACFAIFVLLPLGLFGA) threads the bilayer. Topologically, residues 229-244 (KGLKKVLGMGPGPWMN) are cytoplasmic. Residues 245 to 265 (ILWVWFIFWWPHGVVLGLDFL) traverse the membrane as a helical segment. The Extracellular portion of the chain corresponds to 266 to 287 (VRSKLLLLPTCLAQQVLDLLLN). Residues 288-308 (LAEALAIVHCVATPLLLALFC) form a helical membrane-spanning segment. At 309-336 (HQATRTLVPSLPLPERWSSPVDTLGSKS) the chain is on the cytoplasmic side.

The protein belongs to the G-protein coupled receptor 1 family. Atypical chemokine receptor subfamily.

Its subcellular location is the early endosome. It is found in the recycling endosome. The protein resides in the membrane. In terms of biological role, atypical chemokine receptor that controls chemokine levels and localization via high-affinity chemokine binding that is uncoupled from classic ligand-driven signal transduction cascades, resulting instead in chemokine sequestration, degradation, or transcytosis. Also known as interceptor (internalizing receptor) or chemokine-scavenging receptor or chemokine decoy receptor. Has a promiscuous chemokine-binding profile, interacting with inflammatory chemokines of both the CXC and the CC subfamilies but not with homeostatic chemokines. Acts as a receptor for chemokines including CCL2, CCL5, CCL7, CCL11, CCL13, CCL14, CCL17, CXCL5, CXCL6, IL8/CXCL8, CXCL11, GRO, RANTES, MCP-1 and TARC. May regulate chemokine bioavailability and, consequently, leukocyte recruitment through two distinct mechanisms: when expressed in endothelial cells, it sustains the abluminal to luminal transcytosis of tissue-derived chemokines and their subsequent presentation to circulating leukocytes; when expressed in erythrocytes, serves as blood reservoir of cognate chemokines but also as a chemokine sink, buffering potential surges in plasma chemokine levels. The polypeptide is Atypical chemokine receptor 1 (ACKR1) (Saguinus imperator (Emperor tamarin)).